The sequence spans 324 residues: Lipoyl synthase (324 aa).

[4Fe-4S] cluster contacts are provided by Cys65, Cys70, Cys76, Cys91, Cys95, Cys98, and Ser302. The Radical SAM core domain occupies 77-291; that stretch reads WEDREATFLI…AQYAEGLGFA (215 aa).

This sequence belongs to the radical SAM superfamily. Lipoyl synthase family. The cofactor is [4Fe-4S] cluster.

Its subcellular location is the cytoplasm. It carries out the reaction [[Fe-S] cluster scaffold protein carrying a second [4Fe-4S](2+) cluster] + N(6)-octanoyl-L-lysyl-[protein] + 2 oxidized [2Fe-2S]-[ferredoxin] + 2 S-adenosyl-L-methionine + 4 H(+) = [[Fe-S] cluster scaffold protein] + N(6)-[(R)-dihydrolipoyl]-L-lysyl-[protein] + 4 Fe(3+) + 2 hydrogen sulfide + 2 5'-deoxyadenosine + 2 L-methionine + 2 reduced [2Fe-2S]-[ferredoxin]. The protein operates within protein modification; protein lipoylation via endogenous pathway; protein N(6)-(lipoyl)lysine from octanoyl-[acyl-carrier-protein]: step 2/2. Catalyzes the radical-mediated insertion of two sulfur atoms into the C-6 and C-8 positions of the octanoyl moiety bound to the lipoyl domains of lipoate-dependent enzymes, thereby converting the octanoylated domains into lipoylated derivatives. The chain is Lipoyl synthase from Mycobacterium ulcerans (strain Agy99).